A 499-amino-acid polypeptide reads, in one-letter code: Low-affinity inorganic phosphate transporter PitB (499 aa).

Transmembrane regions (helical) follow at residues Phe5 to Phe25, Leu52 to Val72, Leu94 to Phe114, Leu124 to Met144, Ile155 to Phe175, Pro207 to Ala227, Gly233 to Met253, Ala382 to Trp402, Ala430 to Leu450, and Ile473 to Trp493.

This sequence belongs to the inorganic phosphate transporter (PiT) (TC 2.A.20) family. Pit subfamily.

The protein resides in the cell inner membrane. The enzyme catalyses phosphate(in) + H(+)(in) = phosphate(out) + H(+)(out). Its function is as follows. Low-affinity inorganic phosphate transporter. This chain is Low-affinity inorganic phosphate transporter PitB, found in Escherichia coli (strain K12).